The primary structure comprises 205 residues: SREBP regulating gene protein (205 aa).

Residues 1–16 lie on the Cytoplasmic side of the membrane; the sequence is MVNLAAMVWRRLLRKR. The chain crosses the membrane as a helical span at residues 17 to 35; sequence WVLALVFGLSLVYFLSSTF. Residues 36–205 lie on the Lumenal side of the membrane; the sequence is KQEERAVRDR…GESPPELFPA (170 aa). N-linked (GlcNAc...) asparagine glycosylation occurs at Asn-67.

It belongs to the SPRING family. As to quaternary structure, interacts with SCAP.

It is found in the golgi apparatus membrane. Functionally, positively regulates hepatic SREBP signaling pathway by modulating the proper localization of SCAP (SREBP cleavage-activating protein) to the endoplasmic reticulum, thereby controlling the level of functional SCAP. This is SREBP regulating gene protein from Homo sapiens (Human).